Consider the following 331-residue polypeptide: Tryptophan--tRNA ligase (331 aa).

ATP-binding positions include 10–12 (QPS) and 18–19 (GN). A 'HIGH' region motif is present at residues 11-19 (PSGQLTLGN). Residue D133 participates in L-tryptophan binding. Residues 145–147 (GED), V184, and 193–197 (KMSKS) contribute to the ATP site. The 'KMSKS' region signature appears at 193-197 (KMSKS).

Belongs to the class-I aminoacyl-tRNA synthetase family. As to quaternary structure, homodimer.

It localises to the cytoplasm. It carries out the reaction tRNA(Trp) + L-tryptophan + ATP = L-tryptophyl-tRNA(Trp) + AMP + diphosphate + H(+). Its function is as follows. Catalyzes the attachment of tryptophan to tRNA(Trp). The sequence is that of Tryptophan--tRNA ligase from Listeria monocytogenes serotype 4b (strain F2365).